We begin with the raw amino-acid sequence, 164 residues long: Large ribosomal subunit protein uL10 (164 aa).

The protein belongs to the universal ribosomal protein uL10 family. Part of the ribosomal stalk of the 50S ribosomal subunit. The N-terminus interacts with L11 and the large rRNA to form the base of the stalk. The C-terminus forms an elongated spine to which L12 dimers bind in a sequential fashion forming a multimeric L10(L12)X complex.

Functionally, forms part of the ribosomal stalk, playing a central role in the interaction of the ribosome with GTP-bound translation factors. This chain is Large ribosomal subunit protein uL10, found in Helicobacter pylori (strain G27).